The chain runs to 588 residues: Sulfite reductase [NADPH] hemoprotein beta-component (588 aa).

The span at 1–10 (MSDKKQKGLE) shows a compositional bias: basic and acidic residues. Positions 1 to 20 (MSDKKQKGLEWQDNPLSDNE) are disordered. Cys443, Cys449, Cys488, and Cys492 together coordinate [4Fe-4S] cluster. Position 492 (Cys492) interacts with siroheme.

Belongs to the nitrite and sulfite reductase 4Fe-4S domain family. In terms of assembly, alpha(8)-beta(8). The alpha component is a flavoprotein, the beta component is a hemoprotein. The cofactor is siroheme. [4Fe-4S] cluster is required as a cofactor.

The catalysed reaction is hydrogen sulfide + 3 NADP(+) + 3 H2O = sulfite + 3 NADPH + 4 H(+). It functions in the pathway sulfur metabolism; hydrogen sulfide biosynthesis; hydrogen sulfide from sulfite (NADPH route): step 1/1. In terms of biological role, component of the sulfite reductase complex that catalyzes the 6-electron reduction of sulfite to sulfide. This is one of several activities required for the biosynthesis of L-cysteine from sulfate. This chain is Sulfite reductase [NADPH] hemoprotein beta-component, found in Mannheimia succiniciproducens (strain KCTC 0769BP / MBEL55E).